The primary structure comprises 481 residues: Small ribosomal subunit protein bS1 (481 aa).

4 consecutive S1 motif domains span residues 36–105 (GDIV…LSKK), 123–188 (DEAV…LSRR), 209–277 (GTIR…LSLK), and 294–363 (GQIV…LSLK). Residues 429-467 (TAQMEKFAAAEAAGRGADDQSSASSAPSEKTAGGSLASD) form a disordered region. A compositionally biased stretch (low complexity) spans 437–456 (AAEAAGRGADDQSSASSAPS).

This sequence belongs to the bacterial ribosomal protein bS1 family.

In terms of biological role, binds mRNA; thus facilitating recognition of the initiation point. It is needed to translate mRNA with a short Shine-Dalgarno (SD) purine-rich sequence. This Mycobacterium tuberculosis (strain CDC 1551 / Oshkosh) protein is Small ribosomal subunit protein bS1 (rpsA).